Here is a 467-residue protein sequence, read N- to C-terminus: Tubulointerstitial nephritis antigen-like (467 aa).

A signal peptide spans M1 to G21. In terms of domain architecture, SMB spans E50–P98. Disulfide bonds link C54–C73, C71–C73, C71–C85, C77–C84, and C85–C92. N-linked (GlcNAc...) asparagine glycosylation occurs at N78. N-linked (GlcNAc...) asparagine glycosylation occurs at N161.

It belongs to the peptidase C1 family. Glycosylated. In terms of tissue distribution, highly expressed in aorta, heart, placenta, kidney and a colorectal adenocarcinoma cell line. Moderately expressed in skeletal muscle, pancreas, lung, lymph nodes, adrenal gland, bone marrow and thyroid. Weakly expressed in colon, small intestine, ovary, spleen, testis and prostate. Predominantly found in vascular smooth muscle cells, but also in cardiac and skeletal muscle cells as well as kidney.

It localises to the secreted. In terms of biological role, may be implicated in the adrenocortical zonation and in mechanisms for repressing the CYP11B1 gene expression in adrenocortical cells. This is a non catalytic peptidase C1 family protein. This chain is Tubulointerstitial nephritis antigen-like (TINAGL1), found in Homo sapiens (Human).